Reading from the N-terminus, the 362-residue chain is 3-isopropylmalate dehydrogenase (362 aa).

Residue 78 to 91 (GPKWESLPPDEQPE) participates in NAD(+) binding. Substrate-binding residues include arginine 99, arginine 109, arginine 138, and aspartate 227. Mg(2+) contacts are provided by aspartate 227, aspartate 251, and aspartate 255. 285–297 (GSAPDIAGQGIAN) is an NAD(+) binding site.

The protein belongs to the isocitrate and isopropylmalate dehydrogenases family. LeuB type 1 subfamily. In terms of assembly, homodimer. Mg(2+) serves as cofactor. Requires Mn(2+) as cofactor.

The protein resides in the cytoplasm. It carries out the reaction (2R,3S)-3-isopropylmalate + NAD(+) = 4-methyl-2-oxopentanoate + CO2 + NADH. It participates in amino-acid biosynthesis; L-leucine biosynthesis; L-leucine from 3-methyl-2-oxobutanoate: step 3/4. Its function is as follows. Catalyzes the oxidation of 3-carboxy-2-hydroxy-4-methylpentanoate (3-isopropylmalate) to 3-carboxy-4-methyl-2-oxopentanoate. The product decarboxylates to 4-methyl-2 oxopentanoate. In Geobacter sulfurreducens (strain ATCC 51573 / DSM 12127 / PCA), this protein is 3-isopropylmalate dehydrogenase.